The chain runs to 465 residues: FAD-dependent oxidoreductase pigF (465 aa).

The N-terminal stretch at 1–17 (MMLLTLLILSSVGLAAA) is a signal peptide. 4 N-linked (GlcNAc...) asparagine glycosylation sites follow: Asn95, Asn138, Asn260, and Asn327. A lipid anchor (GPI-anchor amidated aspartate) is attached at Asp444. The propeptide at 445–465 (SASGIWNLTNAVVLPGLLTGL) is removed in mature form. The N-linked (GlcNAc...) asparagine glycan is linked to Asn451.

Belongs to the beta-cyclopiazonate dehydrogenase family. FAD serves as cofactor.

The protein resides in the cell membrane. Its pathway is secondary metabolite biosynthesis. FAD-dependent oxidoreductase; part of the gene cluster that mediates the biosynthesis of azaphilone pigments (MonAzPs), a complex mixture of compounds with a common azaphilone skeleton very widely used as food colorants. Within the pathway, pigF desaturates C6(7) to afford the orange and red pigments from yellow pigments. The first step of the pathway is performed by the nrPKS pigA that forms the hexaketide precursor from successive condensations of five malonyl-CoA units, with a simple acetyl-CoA starter unit. The role of esterase pigG is not clear, but it may play at most a supplementary role in the formation of the benzaldehyde produced by the pigA nrPKS. This very reactive benzaldehyde is intercepted by the pigC ketoreductase that to provide the first stable enzyme-free MonAzPs intermediate, 6-(4-hydroxy-2-oxopentyl)-3-methyl-2,4-dioxocyclohexane carbaldehyde, also known as M7PKS-1. The FAD-dependent monooxygenase pigN hydroxylates M7PKS-1 at C-4, which triggers the formation of the pyran ring. PigJ, pigK and pigD are involved in the acetylation of the pyran ring. PigJ and pigK form the two subunits of a dedicated fungal FAS that produces the side chain fatty acyl moiety of MonAzPs and pigD transfers the fatty acyl chain to the C-4 alcohol. PigM and pigO are involved in the elimination of the omega-1 alcohol. PigM acts as an O-acetyltransferase that synthesizes the putative O-11 acetyl intermediate whereas pigO eliminates acetic acid to yield an intermediate with a C10(11) double bond. The dehydration of the C-11 alcohol followed by the reduction of the C6(7) double bond by the NAD(P)H-dependent oxidoreductase pigE increases the electrophilicity of the C-5 ketone of the resulting acyl benzopyran. This in turn sets up the C-5 ketone for an intramolecular Knoevenagel aldol condensation with the C-20 enol of the side chain. This condensation affords the characteristic linear tricyclic carbon skeletons of the yellow pigments that serve as the common precursors for the classical yellow pigments monascin and ankaflavin, orange pigments rubopunctatin and monascorubrin, and red pigments ribropunctamine and monascorubramine. The FAD-dependent oxidoreductase pigF is especially invoved in the biosynthesis of orange and red pigments via desaturation of C6(7). The sequence is that of FAD-dependent oxidoreductase pigF from Monascus ruber (Mold).